The following is a 902-amino-acid chain: Translation initiation factor IF-2 (902 aa).

Residues 137–177 show a composition bias toward basic and acidic residues; it reads NLDEQQRLAESDRARDEAIQRKRDEEQAAKDRVEAERKAAE. Disordered regions lie at residues 137-248 and 266-314; these read NLDE…SHVM and HLSA…ERPT. Composition is skewed to low complexity over residues 178 to 229 and 279 to 291; these read EAAA…ATPA and RGKP…SSSS. The tr-type G domain maps to 401-570; that stretch reads SRPPVVTIMG…SLQAEVLELK (170 aa). Residues 410–417 are G1; sequence GHVDHGKT. A GTP-binding site is contributed by 410–417; the sequence is GHVDHGKT. The segment at 435-439 is G2; it reads GITQH. Residues 456–459 are G3; it reads DTPG. GTP contacts are provided by residues 456–460 and 510–513; these read DTPGH and NKID. The segment at 510–513 is G4; that stretch reads NKID. A G5 region spans residues 546–548; it reads SAK.

It belongs to the TRAFAC class translation factor GTPase superfamily. Classic translation factor GTPase family. IF-2 subfamily.

Its subcellular location is the cytoplasm. One of the essential components for the initiation of protein synthesis. Protects formylmethionyl-tRNA from spontaneous hydrolysis and promotes its binding to the 30S ribosomal subunits. Also involved in the hydrolysis of GTP during the formation of the 70S ribosomal complex. This chain is Translation initiation factor IF-2, found in Xanthomonas campestris pv. campestris (strain 8004).